The following is a 638-amino-acid chain: NBPF family member NBPF4 (638 aa).

Coiled-coil stretches lie at residues 10–43 (SERA…EKFL) and 69–115 (DSVL…KLRE). Positions 157–285 (HLVHKLSPEN…VPPRHHDKSN (129 aa)) are disordered. The segment covering 165–179 (ENDEDEDEDEDDKDE) has biased composition (acidic residues). Residues 174 to 261 (EDDKDEEVEK…EEEEALNIPP (88 aa)) form the Olduvai 1 domain. The segment covering 192–202 (EVQKTEEKEVP) has biased composition (basic and acidic residues). A compositionally biased stretch (low complexity) spans 214-226 (SNSHNPSNSNQPH). Composition is skewed to basic and acidic residues over residues 232-251 (TFKE…HPHD) and 264-273 (QNDHEEEEGK). 2 Olduvai domains span residues 326–399 (EKQS…ALVD) and 400–503 (KIKK…SQAQ). A disordered region spans residues 562–584 (GMKNPPQLEDDALEGSASNTQGR).

Belongs to the NBPF family. Expressed in testis.

It is found in the cytoplasm. The polypeptide is NBPF family member NBPF4 (Homo sapiens (Human)).